Here is a 259-residue protein sequence, read N- to C-terminus: Probable ABC transporter permease protein RC0129 (259 aa).

5 consecutive transmembrane segments (helical) span residues 13–35, 49–69, 148–168, 195–215, and 237–257; these read TVKF…SSII, LFIG…SGAV, VITA…IGVM, PIDV…ISII, and AVVN…ELFF.

This sequence belongs to the MlaE permease family.

Its subcellular location is the cell inner membrane. Could be part of an ABC transporter complex. In Rickettsia conorii (strain ATCC VR-613 / Malish 7), this protein is Probable ABC transporter permease protein RC0129.